An 802-amino-acid chain; its full sequence is Receptor-type tyrosine-protein phosphatase alpha (802 aa).

The N-terminal stretch at 1–19 (MDSWFILVLLGSGLICVSA) is a signal peptide. Topologically, residues 20-151 (NNATTVAPSV…DSKDRRDETP (132 aa)) are extracellular. N21 and N36 each carry an N-linked (GlcNAc...) asparagine glycan. The tract at residues 39–59 (TAEPVKEEAKTSNPTSSLTSL) is disordered. 5 N-linked (GlcNAc...) asparagine glycosylation sites follow: N68, N80, N86, N104, and N124. Polar residues-rich tracts occupy residues 79 to 115 (VNSS…QFTD) and 123 to 141 (GNSS…SGNS). The segment at 79 to 146 (VNSSDSDNGT…PSGNSDSKDR (68 aa)) is disordered. Residues 152-174 (IIAVMVALSSLLVIVFIIIVLYM) traverse the membrane as a helical segment. Topologically, residues 175-802 (LRFKKYKQAG…DAFSDYANFK (628 aa)) are cytoplasmic. 2 positions are modified to phosphoserine: S211 and S213. Tyrosine-protein phosphatase domains follow at residues 241-501 (FREE…LLEH) and 533-791 (LEEE…VQEY). Residues D410, 442–448 (CSAGVGR), and Q486 each bind substrate. C442 serves as the catalytic Phosphocysteine intermediate. The active-site Phosphocysteine intermediate is C732. Y798 carries the post-translational modification Phosphotyrosine.

The protein belongs to the protein-tyrosine phosphatase family. Receptor class 4 subfamily. In terms of assembly, part of a complex comprised of PTPRA, BCAR1, BCAR3 (via SH2 domain), and SRC. Within the complex, interacts (when phosphorylated on Tyr-798) with BCAR3 (via SH2 domain). Interacts with GRB2. In terms of processing, integrin binding to extracellular matrix induces phosphorylation at Tyr-798 which induces PTPRA localization and recruitment of BCAR3, BCAR1 and CRK to focal adhesions.

Its subcellular location is the cell membrane. It localises to the cell junction. The protein localises to the focal adhesion. The enzyme catalyses O-phospho-L-tyrosyl-[protein] + H2O = L-tyrosyl-[protein] + phosphate. In terms of biological role, tyrosine protein phosphatase which is involved in integrin-mediated focal adhesion formation. Following integrin engagement, specifically recruits BCAR3, BCAR1 and CRK to focal adhesions thereby promoting SRC-mediated phosphorylation of BRAC1 and the subsequent activation of PAK and small GTPase RAC1 and CDC42. The protein is Receptor-type tyrosine-protein phosphatase alpha (PTPRA) of Homo sapiens (Human).